A 301-amino-acid chain; its full sequence is Homoserine O-acetyltransferase (301 aa).

Cysteine 142 functions as the Acyl-thioester intermediate in the catalytic mechanism. Substrate contacts are provided by lysine 163 and serine 192. Residue histidine 235 is the Proton acceptor of the active site. Glutamate 237 is an active-site residue. Position 249 (arginine 249) interacts with substrate.

The protein belongs to the MetA family. In terms of assembly, homodimer.

It localises to the cytoplasm. The enzyme catalyses L-homoserine + acetyl-CoA = O-acetyl-L-homoserine + CoA. It participates in amino-acid biosynthesis; L-methionine biosynthesis via de novo pathway; O-acetyl-L-homoserine from L-homoserine: step 1/1. Its function is as follows. Transfers an acetyl group from acetyl-CoA to L-homoserine, forming acetyl-L-homoserine. Utilizes a ping-pong kinetic mechanism in which the acetyl group of acetyl-CoA is initially transferred to the enzyme to form an acetyl-enzyme intermediate before subsequent transfer to homoserine to form the final product, O-acetylhomoserine. Cannot use succinyl-CoA as the acyl donor. The protein is Homoserine O-acetyltransferase of Bacillus cereus (strain ATCC 10987 / NRS 248).